We begin with the raw amino-acid sequence, 348 residues long: MKQFFEFLITTFLLLGLAAADEHIVYWNSTNSLFRNRQPTIEVRMGDVVRFVCPDNEEGRNDGEYLIVYEVTEFAMDDCALESHSREVIRCAPEGTAEKVLRTQQLSGGRREDWKKQKVPPKNVAQLIRQLNPIPNGKEYQPGQTYYYMTTSTGKANGTNHRMYGLCESQNMRLSMKVSASQPHPTRRAPTRRQEDFVTTASAELMGGQEDEDSDNDNAHLLPRDLEGSTNPKFRRPSQLETAGVENQQFMKVVQMAQAGKTGTFENEKEAIAQKSSEKDGWHPVNVQYVADLMNNAYQNADERISYQRDFEIHEENDLAVKSLEYSSSSTSLSTNFAILLAVIYVLY.

Residues 1–20 (MKQFFEFLITTFLLLGLAAA) form the signal peptide. The region spanning 21-178 (DEHIVYWNST…SQNMRLSMKV (158 aa)) is the Ephrin RBD domain. Residue asparagine 28 is glycosylated (N-linked (GlcNAc...) asparagine). Cystine bridges form between cysteine 53–cysteine 91 and cysteine 79–cysteine 167. Asparagine 157 carries N-linked (GlcNAc...) asparagine glycosylation. Residues 207-237 (GGQEDEDSDNDNAHLLPRDLEGSTNPKFRRP) are disordered. The GPI-anchor amidated serine moiety is linked to residue serine 329. Positions 330-348 (STSLSTNFAILLAVIYVLY) are cleaved as a propeptide — removed in mature form.

Belongs to the ephrin family. Interacts with lat-2. May undergo proteolysis by metalloprotease sup-17 to give rise to a soluble form.

Its subcellular location is the cell membrane. In terms of biological role, regulates the formation or stabilization of cell-cell contacts at several stages of epithelial morphogenesis. In early embryonic development, involved in ventral closure of the epidermis. During male tail morphogenesis, regulates precursor cell sorting together with mab-20 and allows the formation of distinct sensory rays. Probably acts as a ligand for lad-2 to regulate axon guidance of several neurons including SDQL, SDQR, SMD and PLN neurons during neurogenesis. This is Ephrin-4 (efn-4) from Caenorhabditis elegans.